Consider the following 146-residue polypeptide: Hemoglobin subunit beta (146 aa).

The Globin domain occupies 2 to 146 (HWTAEEKQLI…VAHALARKYH (145 aa)). Positions 63 and 92 each coordinate heme b.

Belongs to the globin family. As to quaternary structure, heterotetramer of two alpha chains and two beta chains. In terms of tissue distribution, red blood cells.

Involved in oxygen transport from the lung to the various peripheral tissues. This Aquila chrysaetos (Golden eagle) protein is Hemoglobin subunit beta (HBB).